The sequence spans 103 residues: MQNQKIRIRLKAFDYRLIDQSAAEIVDTAKRTGAVVKGPVPLPTRIERFDILRSPHVNKTSRDQLEIRTHLRLMDIVDPTEKTVDALMKLDLPAGVDVEIKLQ.

This sequence belongs to the universal ribosomal protein uS10 family. Part of the 30S ribosomal subunit.

In terms of biological role, involved in the binding of tRNA to the ribosomes. The protein is Small ribosomal subunit protein uS10 of Polynucleobacter asymbioticus (strain DSM 18221 / CIP 109841 / QLW-P1DMWA-1) (Polynucleobacter necessarius subsp. asymbioticus).